The sequence spans 141 residues: Protein X (141 aa).

The tract at residues 25–52 (SSGPSFPRPAAGSAASSASSPSPSDDSD) is disordered. A mitochondrial targeting sequence region spans residues 68–113 (PCCLVFTCADLRTMDSTVNFVSWHANRQLGMPSKDLWTPYIKDQLL).

Belongs to the orthohepadnavirus protein X family. In terms of assembly, may form homodimer. May interact with host CEBPA, CFLAR, CREB1, DDB1, E4F1, HBXIP, HSPD1/HSP60, NFKBIA, POLR2E and SMAD4. Interacts with host SMC5-SMC6 complex and induces its degradation. Interacts with host TRPC4AP; leading to prevent ubiquitination of TRPC4AP. Interacts with host PLSCR1; this interaction promotes ubiquitination and degradation of HBx and impairs HBx-mediated cell proliferation. A fraction may be phosphorylated in insect cells and HepG2 cells, a human hepatoblastoma cell line. Phosphorylated in vitro by host protein kinase C or mitogen-activated protein kinase. N-acetylated in insect cells.

The protein localises to the host cytoplasm. It is found in the host nucleus. Its subcellular location is the host mitochondrion. Its function is as follows. Multifunctional protein that plays a role in silencing host antiviral defenses and promoting viral transcription. Does not seem to be essential for HBV infection. May be directly involved in development of cirrhosis and liver cancer (hepatocellular carcinoma). Most of cytosolic activities involve modulation of cytosolic calcium. The effect on apoptosis is controversial depending on the cell types in which the studies have been conducted. May induce apoptosis by localizing in mitochondria and causing loss of mitochondrial membrane potential. May also modulate apoptosis by binding host CFLAR, a key regulator of the death-inducing signaling complex (DISC). Promotes viral transcription by using the host E3 ubiquitin ligase DDB1 to target the SMC5-SMC6 complex to proteasomal degradation. This host complex would otherwise bind to viral episomal DNA, and prevents its transcription. Moderately stimulates transcription of many different viral and cellular transcription elements. Promoters and enhancers stimulated by HBx contain DNA binding sites for NF-kappa-B, AP-1, AP-2, c-EBP, ATF/CREB, or the calcium-activated factor NF-AT. The chain is Protein X from Woodchuck hepatitis B virus (isolate 2) (WHV).